Reading from the N-terminus, the 322-residue chain is Labrum-interacting protein from saliva LIPS-2 (322 aa).

The signal sequence occupies residues 1–20 (MKTSLPIVVLLTAVISGVHP). Cys27 and Cys62 form a disulfide bridge. 2 N-linked (GlcNAc...) asparagine glycosylation sites follow: Asn168 and Asn175. Residues Cys249 and Cys295 are joined by a disulfide bond.

As to quaternary structure, monomer in solution. Interacts (via the N-terminal domain) with cuticular protein Cp19 (via the C-terminus). In terms of processing, proteolytically cleaved by human mast cell tryptase and chymase. Glycosylated. As to expression, female salivary gland (at protein level). Female saliva (at protein level).

Its subcellular location is the secreted. Functionally, salivary protein that promotes mosquito blood feeding on the vertebrate host by inducing morphological changes in the mosquito labrum. Interacts with the mosquito labrum end tip and triggers salivation and probing. Modulates enzymatic activities of human tryptase and chymase. The chain is Labrum-interacting protein from saliva LIPS-2 from Aedes albopictus (Asian tiger mosquito).